A 252-amino-acid chain; its full sequence is Origin recognition complex subunit 6 (252 aa).

Thr195 bears the Phosphothreonine mark. Lys210 is covalently cross-linked (Glycyl lysine isopeptide (Lys-Gly) (interchain with G-Cter in SUMO2)). Thr229 carries the post-translational modification Phosphothreonine.

Belongs to the ORC6 family. Component of ORC, a complex composed of at least 6 subunits: ORC1, ORC2, ORC3, ORC4, ORC5 and ORC6. ORC is regulated in a cell-cycle dependent manner. It is sequentially assembled at the exit from anaphase of mitosis and disassembled as cells enter S phase. Interacts with DBF4.

The protein localises to the nucleus. Component of the origin recognition complex (ORC) that binds origins of replication. DNA-binding is ATP-dependent. The specific DNA sequences that define origins of replication have not been identified yet. ORC is required to assemble the pre-replication complex necessary to initiate DNA replication. This is Origin recognition complex subunit 6 (ORC6) from Bos taurus (Bovine).